We begin with the raw amino-acid sequence, 149 residues long: Calmodulin-5/6/7/8 (149 aa).

Ala-2 carries the N-acetylalanine modification. EF-hand domains are found at residues 8 to 43 (DQIS…LGQN), 44 to 79 (PTEA…KMKD), 81 to 116 (DSEE…LGEK), and 117 to 149 (LTDE…MMAK). Positions 21, 23, 25, 27, 32, 57, 59, 61, 63, 68, 94, 96, 98, and 105 each coordinate Ca(2+). An N6,N6,N6-trimethyllysine modification is found at Lys-116. Ca(2+) contacts are provided by Asp-130, Asp-132, Asp-134, Gln-136, and Glu-141.

It belongs to the calmodulin family. In terms of tissue distribution, high expression of PCM5 and 8 in stolon tips and stems, moderate in roots, and low in leaves. Steady-state expression of PCM6 in all the tissues tested, except in the leaves where the expression is lower.

In terms of biological role, calmodulin mediates the control of a large number of enzymes, ion channels and other proteins by Ca(2+). Among the enzymes to be stimulated by the calmodulin-Ca(2+) complex are a number of protein kinases and phosphatases. This chain is Calmodulin-5/6/7/8 (PCM5), found in Solanum tuberosum (Potato).